We begin with the raw amino-acid sequence, 211 residues long: Dibenzothiophene metabolism operon protein DoxH (211 aa).

Its pathway is aromatic compound metabolism; naphthalene degradation. Its function is as follows. May be involved in the conversion of 2-hydroxy-4-(2'-oxo-3,5-cyclohexadienyl)-buta-2,4-dienoate to cis-O-hydroxybenzylidenepyruvate. DoxH and doxJ encode different enzymes that may have interchangeable functions. This is Dibenzothiophene metabolism operon protein DoxH (doxH) from Pseudomonas sp. (strain C18).